The chain runs to 252 residues: Carbohydrate deacetylase (252 aa).

The Mg(2+) site is built by His59 and His122.

The protein belongs to the YdjC deacetylase family. Homodimer. It depends on Mg(2+) as a cofactor.

In terms of biological role, probably catalyzes the deacetylation of acetylated carbohydrates an important step in the degradation of oligosaccharides. The polypeptide is Carbohydrate deacetylase (Vibrio vulnificus (strain CMCP6)).